The primary structure comprises 202 residues: LexA repressor (202 aa).

A DNA-binding region (H-T-H motif) is located at residues 28–48 (RAEIAAQLGFRSPNAAEEHLK). Catalysis depends on for autocatalytic cleavage activity residues serine 119 and lysine 156.

It belongs to the peptidase S24 family. In terms of assembly, homodimer.

It carries out the reaction Hydrolysis of Ala-|-Gly bond in repressor LexA.. Functionally, represses a number of genes involved in the response to DNA damage (SOS response), including recA and lexA. Binds to the 16 bp palindromic sequence 5'-CTGTATATATATACAG-3'. In the presence of single-stranded DNA, RecA interacts with LexA causing an autocatalytic cleavage which disrupts the DNA-binding part of LexA, leading to derepression of the SOS regulon and eventually DNA repair. This chain is LexA repressor, found in Erwinia tasmaniensis (strain DSM 17950 / CFBP 7177 / CIP 109463 / NCPPB 4357 / Et1/99).